Here is a 206-residue protein sequence, read N- to C-terminus: Dephospho-CoA kinase (206 aa).

Residues 4-204 (IVGLTGGIGS…HQYLQLANAQ (201 aa)) form the DPCK domain. An ATP-binding site is contributed by 12–17 (GSGKST).

It belongs to the CoaE family.

Its subcellular location is the cytoplasm. It carries out the reaction 3'-dephospho-CoA + ATP = ADP + CoA + H(+). It functions in the pathway cofactor biosynthesis; coenzyme A biosynthesis; CoA from (R)-pantothenate: step 5/5. Functionally, catalyzes the phosphorylation of the 3'-hydroxyl group of dephosphocoenzyme A to form coenzyme A. The polypeptide is Dephospho-CoA kinase (Pasteurella multocida (strain Pm70)).